The chain runs to 103 residues: Flagellar hook-basal body complex protein FliE (103 aa).

This sequence belongs to the FliE family.

Its subcellular location is the bacterial flagellum basal body. In Photorhabdus laumondii subsp. laumondii (strain DSM 15139 / CIP 105565 / TT01) (Photorhabdus luminescens subsp. laumondii), this protein is Flagellar hook-basal body complex protein FliE.